The following is a 653-amino-acid chain: Potassium voltage-gated channel subfamily A member 4 (653 aa).

Residues 1–304 lie on the Cytoplasmic side of the membrane; sequence MEVAMVSAES…LLFEYPESSS (304 aa). The interval 24 to 148 is disordered; it reads QARARERERL…RFYYSEDDHG (125 aa). Over residues 36 to 52 the composition is skewed to low complexity; it reads SRAAAAAAVAAATAAVE. Over residues 81-97 the composition is skewed to basic residues; sequence GSRRRRRQRSEKKKAHY. Position 90 is a phosphoserine; by PKA (Ser-90). Position 122 is a phosphoserine (Ser-122). The segment covering 122 to 137 has biased composition (acidic residues); that stretch reads SEEEEDEEEEEEEEEE. Residues 305 to 326 form a helical membrane-spanning segment; it reads PARGIAIVSVLVILISIVIFCL. Over 327–370 the chain is Extracellular; sequence ETLPEFRDDRDLVMALSAGGHGGLLNDTSAPHLENSGHTIFNDP. Asn-352 carries an N-linked (GlcNAc...) asparagine glycan. Residues 371 to 392 traverse the membrane as a helical segment; the sequence is FFIVETVCIVWFSFEFVVRCFA. Over 393 to 403 the chain is Cytoplasmic; sequence CPSQALFFKNI. The helical transmembrane segment at 404–424 threads the bilayer; sequence MNIIDIVSILPYFITLGTDLA. The Extracellular segment spans residues 425-439; it reads QQQGGGNGQQQQAMS. The helical; Voltage-sensor transmembrane segment at 440–460 threads the bilayer; it reads FAILRIIRLVRVFRIFKLSRH. Over 461–475 the chain is Cytoplasmic; sequence SKGLQILGHTLRASM. Residues 462–475 are S4-S5 linker; that stretch reads KGLQILGHTLRASM. The helical transmembrane segment at 476–497 threads the bilayer; that stretch reads RELGLLIFFLFIGVILFSSAVY. The Extracellular portion of the chain corresponds to 498–511; that stretch reads FAEADEPTTHFQSI. The helical intramembrane region spans 512-523; it reads PDAFWWAVVTMT. The short motif at 524 to 529 is the Selectivity filter element; sequence TVGYGD. Residues 524 to 531 lie within the membrane without spanning it; sequence TVGYGDMK. Residues 532-538 are Extracellular-facing; that stretch reads PITVGGK. Residues 539-567 form a helical membrane-spanning segment; sequence IVGSLCAIAGVLTIALPVPVIVSNFNYFY. The Cytoplasmic segment spans residues 568-653; sequence HRETENEEQT…SNAKAVETDV (86 aa). Residue Ser-599 is modified to Phosphoserine; by PKA. The segment covering 629–640 has biased composition (basic and acidic residues); the sequence is CQGKGDDSETDK. Residues 629 to 653 form a disordered region; it reads CQGKGDDSETDKNNCSNAKAVETDV. The short motif at 651–653 is the PDZ-binding element; the sequence is TDV.

Belongs to the potassium channel family. A (Shaker) (TC 1.A.1.2) subfamily. Kv1.4/KCNA4 sub-subfamily. In terms of assembly, homotetramer and heterotetramer of potassium channel proteins. Interacts with KCNAB1 and KCNAB2. Interacts with DLG1, DLG2 and DLG4 via their PDZ domains. Interacts with SIGMAR1. Detected in a complex with KCNA1. Interacts with KCNA2. Part of a complex containing KCNA1, KCNAB1 and LGI1. Interacts (via cytoplasmic N-terminal domain) with KCNRG. Expressed in brain, and at lower levels in the testis, lung, kidney, colon and heart. Detected in heart ventricle.

The protein resides in the cell membrane. Its subcellular location is the cell projection. It is found in the axon. The enzyme catalyses K(+)(in) = K(+)(out). With respect to regulation, inhibited by 4-aminopyridine (4-AP), but not by tetraethylammonium (TEA) and charybdotoxin (CTX). Functionally, voltage-gated potassium channel that mediates transmembrane potassium transport in excitable membranes. Forms tetrameric potassium-selective channels through which potassium ions pass in accordance with their electrochemical gradient. The channel alternates between opened and closed conformations in response to the voltage difference across the membrane. Can form functional homotetrameric channels and heterotetrameric channels that contain variable proportions of KCNA1, KCNA2, KCNA4, KCNA5, and possibly other family members as well; channel properties depend on the type of alpha subunits that are part of the channel. Channel properties are modulated by cytoplasmic beta subunits that regulate the subcellular location of the alpha subunits and promote rapid inactivation. In vivo, membranes probably contain a mixture of heteromeric potassium channel complexes, making it difficult to assign currents observed in intact tissues to any particular potassium channel family member. Homotetrameric KCNA4 forms a potassium channel that opens in response to membrane depolarization, followed by rapid spontaneous channel closure. Likewise, a heterotetrameric channel formed by KCNA1 and KCNA4 shows rapid inactivation. The protein is Potassium voltage-gated channel subfamily A member 4 (KCNA4) of Homo sapiens (Human).